The chain runs to 506 residues: MSPAGCSHVNGFKVDNWKQNLRVIYQCFVWSGSAETRKRKAKSCICHMCGAHLNRLHSCLHCVFFGCFSKKHIHEHAKNKRHNLAIDLLYGGIYCFVCQDYIYDKDMEQIAKEEQRKAWKLQGIGEKYSMWEPTKRELELLRHNPKRRKITANCTIGLRGLINLGNTCFMNCIVQALTHTPLLRDFFLSDRHKCEMQSNSCLVCEMSQLFQEFYSGHRSPHIPFRLLHLVWTHARHLAGYEQQDAHEFLIAALDVLHRHCKDDNGKKANNPNHCNCIIDQIFTGGLQSDVTCQVCHGVSTTIDPFWDISLDLPGSSTPFWPLSPGSDGSVVNGDSHPSGATTLTDCLRRFTRPEHLGSSAKIKCSGCHSYQESTKQLTMKRLPIVACFHLKRFEHSAKLRRKITTYVSFPLELDMTPFMASSKESRMNGQYQQPVDSLNNDNKYSLFAVVNHQGTLESGHYTTFIRQHKDQWFKCDDAIITKASIKDVLDSEGYLLFYHKQFLEYE.

The segment at 4-121 (AGCSHVNGFK…KEEQRKAWKL (118 aa)) adopts a UBP-type zinc-finger fold. C6, H8, C46, C49, C59, C62, C67, H72, H76, H82, C95, and C98 together coordinate Zn(2+). Positions 159-501 (RGLINLGNTC…EGYLLFYHKQ (343 aa)) constitute a USP domain. Residue C168 is the Nucleophile of the active site. Residue H460 is the Proton acceptor of the active site.

It belongs to the peptidase C19 family. UBP8 subfamily. Component of some SAGA transcription coactivator-HAT complexes.

It localises to the nucleus. It carries out the reaction Thiol-dependent hydrolysis of ester, thioester, amide, peptide and isopeptide bonds formed by the C-terminal Gly of ubiquitin (a 76-residue protein attached to proteins as an intracellular targeting signal).. Functionally, histone deubiquitinating component of the transcription regulatory histone acetylation (HAT) complex SAGA. Catalyzes the deubiquitination of both histones H2A and H2B, thereby acting as a coactivator. Recruited to specific gene promoters by activators, where it is required for transcription. This is Ubiquitin carboxyl-terminal hydrolase 22 (usp22) from Danio rerio (Zebrafish).